The following is a 382-amino-acid chain: Pyrimidine monooxygenase RutA (382 aa).

FMN is bound by residues Ile-68–Lys-69, Asn-134, Glu-143, Arg-159–Tyr-160, and Ser-209.

The protein belongs to the NtaA/SnaA/DszA monooxygenase family. RutA subfamily.

It catalyses the reaction uracil + FMNH2 + NADH + O2 = (Z)-3-ureidoacrylate + FMN + NAD(+) + H2O + H(+). The catalysed reaction is thymine + FMNH2 + NADH + O2 = (Z)-2-methylureidoacrylate + FMN + NAD(+) + H2O + H(+). Its function is as follows. Catalyzes the pyrimidine ring opening between N-3 and C-4 by an unusual flavin hydroperoxide-catalyzed mechanism, adding oxygen atoms in the process to yield ureidoacrylate peracid, that immediately reacts with FMN forming ureidoacrylate and FMN-N(5)-oxide. The FMN-N(5)-oxide reacts spontaneously with NADH to produce FMN. Requires the flavin reductase RutF to regenerate FMN in vivo. The polypeptide is Pyrimidine monooxygenase RutA (Escherichia coli O81 (strain ED1a)).